A 76-amino-acid chain; its full sequence is Exodeoxyribonuclease 7 small subunit (76 aa).

It belongs to the XseB family. As to quaternary structure, heterooligomer composed of large and small subunits.

It localises to the cytoplasm. It carries out the reaction Exonucleolytic cleavage in either 5'- to 3'- or 3'- to 5'-direction to yield nucleoside 5'-phosphates.. Its function is as follows. Bidirectionally degrades single-stranded DNA into large acid-insoluble oligonucleotides, which are then degraded further into small acid-soluble oligonucleotides. The chain is Exodeoxyribonuclease 7 small subunit from Gluconacetobacter diazotrophicus (strain ATCC 49037 / DSM 5601 / CCUG 37298 / CIP 103539 / LMG 7603 / PAl5).